Reading from the N-terminus, the 80-residue chain is CLAVATA3/ESR (CLE)-related protein 40 (80 aa).

The N-terminal stretch at 1–25 (MAAMKYKGSVFIILVILLLSSSLLA) is a signal peptide. The tract at residues 45–80 (MKKEKKIDGGTANEVEERQVPTGSDPLHHKHIPFTP) is disordered. Position 65 is a hydroxyproline (P65).

The protein belongs to the CLV3/ESR signal peptide family. Mostly expressed at low levels in stems and apex, and, to a lower extent, in roots, seedlings, leaves, flowers, siliques and pollen.

Its subcellular location is the secreted. It localises to the extracellular space. Functionally, extracellular signal peptide secreted by differentiated root cells that regulates root cell fate. Acts with ACR4 as a ligand-receptor pair in a signal transduction pathway, coordinating movement of the root tip and organization of cell divisions in the root meristem. Promotes cell differentiation in the distal root meristem in a dose-dependent manner, especially the transition from columella stem cells (CSC) daughters into columella cells (CCs). Induces ACR4 expression in root quiescent center (QC). Involved in WUX5 QC-specific expression pattern regulation. Regulates the transition of protophloem cells from proliferation to differentiation, thus impinging on postembryonic growth capacity of the root meristem; this signaling pathway requires CRN and CLV2. The protein is CLAVATA3/ESR (CLE)-related protein 40 of Arabidopsis thaliana (Mouse-ear cress).